The following is a 901-amino-acid chain: Aconitate hydratase A (901 aa).

Cysteine 443, cysteine 509, and cysteine 512 together coordinate [4Fe-4S] cluster.

The protein belongs to the aconitase/IPM isomerase family. Monomer. It depends on [4Fe-4S] cluster as a cofactor.

It catalyses the reaction citrate = D-threo-isocitrate. The enzyme catalyses (2S,3R)-3-hydroxybutane-1,2,3-tricarboxylate = 2-methyl-cis-aconitate + H2O. The protein operates within carbohydrate metabolism; tricarboxylic acid cycle; isocitrate from oxaloacetate: step 2/2. Its pathway is organic acid metabolism; propanoate degradation. In terms of biological role, involved in the catabolism of short chain fatty acids (SCFA) via the tricarboxylic acid (TCA)(acetyl degradation route) and probably the 2-methylcitrate cycle I (propionate degradation route). Catalyzes the reversible isomerization of citrate to isocitrate via cis-aconitate. Could catalyze the hydration of 2-methyl-cis-aconitate to yield (2R,3S)-2-methylisocitrate. The apo form of AcnA functions as a RNA-binding regulatory protein. This is Aconitate hydratase A (acnA) from Staphylococcus aureus (strain COL).